Here is a 303-residue protein sequence, read N- to C-terminus: Polyisoprenyl-teichoic acid--peptidoglycan teichoic acid transferase TagU (303 aa).

Residues 1 to 4 are Cytoplasmic-facing; sequence MKKK. A helical; Signal-anchor for type II membrane protein transmembrane segment spans residues 5-25; sequence ILFWVLGILGVLIIGGGIYAY. Residues 26–303 are Extracellular-facing; the sequence is NVYSSVSNTL…KLRTHLEVTK (278 aa).

The protein belongs to the LytR/CpsA/Psr (LCP) family.

It localises to the cell membrane. It functions in the pathway cell wall biogenesis. May catalyze the final step in cell wall teichoic acid biosynthesis, the transfer of the anionic cell wall polymers (APs) from their lipid-linked precursor to the cell wall peptidoglycan (PG). The sequence is that of Polyisoprenyl-teichoic acid--peptidoglycan teichoic acid transferase TagU from Bacillus cereus (strain ZK / E33L).